The primary structure comprises 229 residues: Peptidase E (229 aa).

Catalysis depends on charge relay system residues Ser-120, Asp-135, and His-157.

This sequence belongs to the peptidase S51 family.

It is found in the cytoplasm. The catalysed reaction is Dipeptidase E catalyzes the hydrolysis of dipeptides Asp-|-Xaa. It does not act on peptides with N-terminal Glu, Asn or Gln, nor does it cleave isoaspartyl peptides.. Functionally, hydrolyzes dipeptides containing N-terminal aspartate residues. May play a role in allowing the cell to use peptide aspartate to spare carbon otherwise required for the synthesis of the aspartate family of amino acids. This is Peptidase E from Salmonella paratyphi A (strain AKU_12601).